A 125-amino-acid polypeptide reads, in one-letter code: uncharacterized protein (125 aa).

Residues 19 to 73 enclose the HTH cro/C1-type domain; sequence IYSLRLAKGLSRQQLAEVIDVTHQQLQKYEKAINRISVGRLVLIAEALDRNIDYF. Residues 30–49 constitute a DNA-binding region (H-T-H motif); it reads RQQLAEVIDVTHQQLQKYEK.

This is an uncharacterized protein from Rickettsia conorii (strain ATCC VR-613 / Malish 7).